Here is a 244-residue protein sequence, read N- to C-terminus: 3-deoxy-manno-octulosonate cytidylyltransferase (244 aa).

Belongs to the KdsB family.

The protein resides in the cytoplasm. The enzyme catalyses 3-deoxy-alpha-D-manno-oct-2-ulosonate + CTP = CMP-3-deoxy-beta-D-manno-octulosonate + diphosphate. It participates in nucleotide-sugar biosynthesis; CMP-3-deoxy-D-manno-octulosonate biosynthesis; CMP-3-deoxy-D-manno-octulosonate from 3-deoxy-D-manno-octulosonate and CTP: step 1/1. It functions in the pathway bacterial outer membrane biogenesis; lipopolysaccharide biosynthesis. In terms of biological role, activates KDO (a required 8-carbon sugar) for incorporation into bacterial lipopolysaccharide in Gram-negative bacteria. The polypeptide is 3-deoxy-manno-octulosonate cytidylyltransferase (Anaeromyxobacter sp. (strain Fw109-5)).